The sequence spans 288 residues: Probable ketoamine kinase VV1_2562 (288 aa).

92–94 (NFL) lines the ATP pocket. Catalysis depends on Asp195, which acts as the Proton acceptor.

Belongs to the fructosamine kinase family.

Functionally, ketoamine kinase that phosphorylates ketoamines on the third carbon of the sugar moiety to generate ketoamine 3-phosphate. In Vibrio vulnificus (strain CMCP6), this protein is Probable ketoamine kinase VV1_2562.